Consider the following 420-residue polypeptide: Protein translocase subunit SecY (420 aa).

The next 10 helical transmembrane spans lie at 9 to 29 (ILIT…PIPG), 61 to 81 (LSII…MELL), 104 to 124 (IVRY…SVGL), 141 to 161 (VFMI…MWIG), 173 to 193 (ISLI…SGTF), 203 to 223 (ILML…IIYV), 257 to 277 (LSGV…STIL), 300 to 320 (YNIL…SIVF), 355 to 375 (KLTL…WILV), and 377 to 397 (AMGV…QVAI).

Belongs to the SecY/SEC61-alpha family. As to quaternary structure, component of the Sec protein translocase complex. Heterotrimer consisting of SecY, SecE and SecG subunits. The heterotrimers can form oligomers, although 1 heterotrimer is thought to be able to translocate proteins. Interacts with the ribosome. Interacts with SecDF, and other proteins may be involved. Interacts with SecA.

It localises to the cell inner membrane. In terms of biological role, the central subunit of the protein translocation channel SecYEG. Consists of two halves formed by TMs 1-5 and 6-10. These two domains form a lateral gate at the front which open onto the bilayer between TMs 2 and 7, and are clamped together by SecE at the back. The channel is closed by both a pore ring composed of hydrophobic SecY resides and a short helix (helix 2A) on the extracellular side of the membrane which forms a plug. The plug probably moves laterally to allow the channel to open. The ring and the pore may move independently. This chain is Protein translocase subunit SecY, found in Helicobacter pylori (strain ATCC 700392 / 26695) (Campylobacter pylori).